The sequence spans 340 residues: Terpene synthase 29 (340 aa).

Mg(2+)-binding residues include Asp-132, Glu-197, Asn-257, Ser-261, and Glu-265. The DDXXXXD motif motif lies at 132-138 (DEPDILE). Residues 257 to 265 (NDILSFYKE) carry the NSE/DTE motif motif.

The protein belongs to the trichodiene synthase family. Requires Mg(2+) as cofactor.

In terms of biological role, terpene cyclase that catalyzes the cyclization of farnesyl diphosphate (FPP) to a single major terpene scaffold whose chemical structure is still unknown. The sequence is that of Terpene synthase 29 from Postia placenta (strain ATCC 44394 / Madison 698-R) (Brown rot fungus).